Reading from the N-terminus, the 106-residue chain is Large ribosomal subunit protein eL42 (106 aa).

Belongs to the eukaryotic ribosomal protein eL42 family.

Its subcellular location is the cytoplasm. The chain is Large ribosomal subunit protein eL42 (RPL44) from Trypanosoma brucei brucei.